Here is a 24-residue protein sequence, read N- to C-terminus: Pseudin-2 (24 aa).

In terms of tissue distribution, expressed by the skin glands.

It is found in the secreted. Antimicrobial peptide with activity against fungus (C.albicans) and Gram-positive and Gram-negative bacteria (S.aureus and E.coli). Also has low hemolytic activity against human erythrocytes. The protein is Pseudin-2 of Pseudis paradoxa (Paradoxical frog).